A 1557-amino-acid polypeptide reads, in one-letter code: Target of rapamycin complex 1 subunit KOG1 (1557 aa).

HEAT repeat units follow at residues 548–586, 588–625, 777–814, and 888–925; these read RHPP…WAVY, SLSI…IDYK, CMNT…GFQD, and RQEI…RYSN. Over residues 1084–1098 the composition is skewed to low complexity; sequence SESNSDSDTQSSNTS. Residues 1084–1114 form a disordered region; it reads SESNSDSDTQSSNTSMKSHTSKKGPSGLYLL. WD repeat units follow at residues 1207 to 1248, 1252 to 1293, 1296 to 1346, 1350 to 1390, 1400 to 1440, 1452 to 1492, and 1517 to 1557; these read NNKS…SKFS, PFGT…DTFK, SAWR…VEVD, KTSS…RDSM, KQGV…PVES, SQQK…NSFK, and TSDA…IDYF.

The protein belongs to the WD repeat RAPTOR family. As to quaternary structure, the target of rapamycin complex 1 (TORC1) is composed of at least KOG1, LST8, TCO89 and either TOR1 (TORC1-A) or TOR2 (TORC1-B). Interacts with PIB2; following activation of PIB2 by glutamine or cysteine. TORC1 binds to and is inhibited by FKBP-rapamycin.

The protein resides in the cell membrane. It localises to the vacuole membrane. Its function is as follows. Component of TORC1, which regulates multiple cellular processes to control cell growth in response to environmental signals. Nutrient limitation and environmental stress signals cause inactivation of TORC1. Active TORC1 positively controls ribosome biogenesis via control of rRNA, ribosomal protein and tRNA gene expression, and rRNA processing. TORC1 positively controls protein biosynthesis by regulation of mRNA stability, translation initiation factor activity, and high-affinity amino acid permeases that serve to provide amino acids for use by the translation machinery. TORC1 also promotes growth by sequestering a number of nutrient and general stress-responsive transcription factors in the cytoplasm. TORC1 negatively controls macroautophagy, a process to recycle surplus cytoplasmic mass under nutrient starvation conditions. KOG1 may have a role in binding and recruiting substrates of TORC1. This is Target of rapamycin complex 1 subunit KOG1 (KOG1) from Saccharomyces cerevisiae (strain ATCC 204508 / S288c) (Baker's yeast).